Consider the following 127-residue polypeptide: MRSAYYVLTALLVVASSQVAAESGHQLQAYGHDRITDDNAAMKSLSTRFLRESRDVHGNVANEERSVYSVLASMINEGIEKMPRTAEVLKRKSRSIKDSDKVPHEAKLVNEMFHAAKAKEMMQSAEE.

Residues 1–21 (MRSAYYVLTALLVVASSQVAA) form the signal peptide. The RxLR-dEER signature appears at 48-65 (RFLRESRDVHGNVANEER).

It belongs to the RxLR effector family.

It localises to the secreted. The protein localises to the host nucleus. It is found in the host cytoplasm. In terms of biological role, secreted effector that completely suppresses the host cell death induced by cell death-inducing proteins. In Plasmopara viticola (Downy mildew of grapevine), this protein is Secreted RxLR effector protein 7.